The primary structure comprises 318 residues: Cuticle collagen dpy-7 (318 aa).

4 triple-helical region regions span residues 101–130 (GPIG…DGLD), 147–206 (GPPG…PGDD), 209–235 (GGTG…NGLP), and 240–278 (GPPG…PGGH). The tract at residues 101 to 318 (GPIGPPGVSG…GYSGGGYGKK (218 aa)) is disordered. Positions 187–204 (PQGEPGEQGEPGIKGPPG) are enriched in low complexity. 2 stretches are compositionally biased toward pro residues: residues 216 to 228 (PPGP…PKGP) and 250 to 268 (PPGP…PFGP). Residues 309–318 (GYSGGGYGKK) show a composition bias toward gly residues.

It belongs to the cuticular collagen family. Collagen polypeptide chains are complexed within the cuticle by disulfide bonds and other types of covalent cross-links.

In terms of biological role, nematode cuticles are composed largely of collagen-like proteins. The cuticle functions both as an exoskeleton and as a barrier to protect the worm from its environment. Mutations in dpy-7 affects the body shape. This Caenorhabditis elegans protein is Cuticle collagen dpy-7 (dpy-7).